Reading from the N-terminus, the 224-residue chain is Prolactin-2C3 (224 aa).

Residues 1-29 (MLPSSIQPCSWILLLLLVNSSLLWKNVAS) form the signal peptide. N19 carries N-linked (GlcNAc...) asparagine glycosylation. C33 and C40 form a disulfide bridge. N57, N75, and N88 each carry an N-linked (GlcNAc...) asparagine glycan. 2 disulfides stabilise this stretch: C87-C199 and C216-C224.

Belongs to the somatotropin/prolactin family. Post-translationally, N-glycosylated and sialylated. As to expression, expressed in placenta and hair follicles, with highest expression levels detected in the outer root sheath and no expression detected in bulb. Expressed in placenta, skin wounds, keratinocytes and weakly in embryonic fibroblasts. Expressed in brain, cerebellum and in Neuro-2a cell line. Not detected in liver, kidney, ovary, pituitary gland and brain.

Its subcellular location is the secreted. It localises to the endoplasmic reticulum. In terms of biological role, may have a role in embryonic development. It is likely to provide a growth stimulus to target cells in maternal and fetal tissues during the development of the embryo at mid-gestation. May play a role during wound healing and in the hair follicle cycle as a growth factor and/or an angiogenesis factor. May play a role in microvilli formation and cell proliferation of neuroblastoma cells. In Mus musculus (Mouse), this protein is Prolactin-2C3 (Prl2c3).